We begin with the raw amino-acid sequence, 127 residues long: Large ribosomal subunit protein eL8 (127 aa).

The protein belongs to the eukaryotic ribosomal protein eL8 family. Part of the 50S ribosomal subunit. Probably part of the RNase P complex.

It localises to the cytoplasm. Multifunctional RNA-binding protein that recognizes the K-turn motif in ribosomal RNA, the RNA component of RNase P, box H/ACA, box C/D and box C'/D' sRNAs. This Desulfurococcus amylolyticus (strain DSM 18924 / JCM 16383 / VKM B-2413 / 1221n) (Desulfurococcus kamchatkensis) protein is Large ribosomal subunit protein eL8.